We begin with the raw amino-acid sequence, 101 residues long: Aspartyl/glutamyl-tRNA(Asn/Gln) amidotransferase subunit C (101 aa).

Residues 75–101 are disordered; sequence QEALSGAPDAEEQRFRVPRILDEDVAS. Basic and acidic residues predominate over residues 85-101; the sequence is EEQRFRVPRILDEDVAS.

This sequence belongs to the GatC family. Heterotrimer of A, B and C subunits.

It catalyses the reaction L-glutamyl-tRNA(Gln) + L-glutamine + ATP + H2O = L-glutaminyl-tRNA(Gln) + L-glutamate + ADP + phosphate + H(+). It carries out the reaction L-aspartyl-tRNA(Asn) + L-glutamine + ATP + H2O = L-asparaginyl-tRNA(Asn) + L-glutamate + ADP + phosphate + 2 H(+). Functionally, allows the formation of correctly charged Asn-tRNA(Asn) or Gln-tRNA(Gln) through the transamidation of misacylated Asp-tRNA(Asn) or Glu-tRNA(Gln) in organisms which lack either or both of asparaginyl-tRNA or glutaminyl-tRNA synthetases. The reaction takes place in the presence of glutamine and ATP through an activated phospho-Asp-tRNA(Asn) or phospho-Glu-tRNA(Gln). This is Aspartyl/glutamyl-tRNA(Asn/Gln) amidotransferase subunit C from Salinispora arenicola (strain CNS-205).